The sequence spans 146 residues: Anti-sigma F factor (146 aa).

This sequence belongs to the anti-sigma-factor family.

It carries out the reaction L-seryl-[protein] + ATP = O-phospho-L-seryl-[protein] + ADP + H(+). The catalysed reaction is L-threonyl-[protein] + ATP = O-phospho-L-threonyl-[protein] + ADP + H(+). Binds to sigma F and blocks its ability to form an RNA polymerase holoenzyme (E-sigma F). Phosphorylates SpoIIAA on a serine residue. This phosphorylation may enable SpoIIAA to act as an anti-anti-sigma factor that counteracts SpoIIAB and thus releases sigma F from inhibition. This is Anti-sigma F factor from Anoxybacillus flavithermus (strain DSM 21510 / WK1).